The chain runs to 386 residues: Vesicle-associated protein 2-2 (386 aa).

Met-1 is subject to N-acetylmethionine. The Cytoplasmic segment spans residues 1-363 (MNMPLLDIQP…TKKIVKEVHN (363 aa)). One can recognise an MSP domain in the interval 5–125 (LLDIQPRTLQ…EENKLRVTLV (121 aa)). Ser-279 is modified (phosphoserine). Positions 300-353 (ELKLVKDIEEMKLKVDALESKLKQADSTISKLMEERSISSQHRQSLQHELAELR) form a coiled coil. The helical; Anchor for type IV membrane protein transmembrane segment at 364 to 384 (GFPLLYVCVVAFIAYVIGHFL) threads the bilayer.

It belongs to the VAMP-associated protein (VAP) (TC 9.B.17) family. In terms of assembly, interacts with cowpea mosaic virus (CPMV) NTP-binding protein (NTB).

It localises to the endoplasmic reticulum membrane. May play a role in vesicle trafficking. This is Vesicle-associated protein 2-2 (PVA22) from Arabidopsis thaliana (Mouse-ear cress).